The primary structure comprises 356 residues: Mannonate dehydratase 2 (356 aa).

This sequence belongs to the mannonate dehydratase family. Fe(2+) is required as a cofactor. The cofactor is Mn(2+).

The enzyme catalyses D-mannonate = 2-dehydro-3-deoxy-D-gluconate + H2O. It participates in carbohydrate metabolism; pentose and glucuronate interconversion. Its function is as follows. Catalyzes the dehydration of D-mannonate. The sequence is that of Mannonate dehydratase 2 from Bacillus licheniformis (strain ATCC 14580 / DSM 13 / JCM 2505 / CCUG 7422 / NBRC 12200 / NCIMB 9375 / NCTC 10341 / NRRL NRS-1264 / Gibson 46).